The primary structure comprises 492 residues: Glutamyl-tRNA(Gln) amidotransferase subunit A (492 aa).

Catalysis depends on charge relay system residues lysine 78 and serine 158. Serine 182 serves as the catalytic Acyl-ester intermediate.

Belongs to the amidase family. GatA subfamily. As to quaternary structure, heterotrimer of A, B and C subunits.

It catalyses the reaction L-glutamyl-tRNA(Gln) + L-glutamine + ATP + H2O = L-glutaminyl-tRNA(Gln) + L-glutamate + ADP + phosphate + H(+). Functionally, allows the formation of correctly charged Gln-tRNA(Gln) through the transamidation of misacylated Glu-tRNA(Gln) in organisms which lack glutaminyl-tRNA synthetase. The reaction takes place in the presence of glutamine and ATP through an activated gamma-phospho-Glu-tRNA(Gln). This is Glutamyl-tRNA(Gln) amidotransferase subunit A from Rickettsia akari (strain Hartford).